The chain runs to 354 residues: Dye-decolorizing peroxidase (354 aa).

Asp-165 functions as the Proton acceptor in the catalytic mechanism. Residue His-238 coordinates heme. Positions 312-335 (GLFFSPTVDFLDDPPPLPAPGTPA) are targeting peptide. The span at 324-337 (DPPPLPAPGTPAAP) shows a compositional bias: pro residues. The segment at 324–354 (DPPPLPAPGTPAAPPARNGSLSIGSLKGTTR) is disordered. Residues 342 to 354 (GSLSIGSLKGTTR) are compositionally biased toward polar residues.

This sequence belongs to the DyP-type peroxidase family. As to quaternary structure, found in a complex with type 1 encapsulin, strongly suggesting it is found in a type 1 encapsulin nanocompartment. Homotetramer, presumably also in the type 1 encapsulin nanocompartment. Heme b is required as a cofactor.

It localises to the encapsulin nanocompartment. The protein resides in the cell membrane. The catalysed reaction is 2 a phenolic donor + H2O2 = 2 a phenolic radical donor + 2 H2O. Cargo protein of a type 1 encapsulin nanocompartment. A heme-dependent peroxidase. This cargo-loaded encapsulin nanocompartment is probably involved in protection against oxidative damage. This Mycolicibacterium paratuberculosis (strain ATCC BAA-968 / K-10) (Mycobacterium paratuberculosis) protein is Dye-decolorizing peroxidase.